A 520-amino-acid polypeptide reads, in one-letter code: GMP synthase [glutamine-hydrolyzing] (520 aa).

Residues 13–205 (KIIVLDYGSQ…ALNICKAKGD (193 aa)) form the Glutamine amidotransferase type-1 domain. The active-site Nucleophile is Cys-90. Catalysis depends on residues His-179 and Glu-181. Residues 206–395 (WSMDNFIDMQ…LGMPDHIVWR (190 aa)) form the GMPS ATP-PPase domain. ATP is bound at residue 233 to 239 (SGGVDSS).

Homodimer.

It carries out the reaction XMP + L-glutamine + ATP + H2O = GMP + L-glutamate + AMP + diphosphate + 2 H(+). The protein operates within purine metabolism; GMP biosynthesis; GMP from XMP (L-Gln route): step 1/1. In terms of biological role, catalyzes the synthesis of GMP from XMP. The polypeptide is GMP synthase [glutamine-hydrolyzing] (Streptococcus pneumoniae serotype 2 (strain D39 / NCTC 7466)).